The sequence spans 329 residues: Ankyrin repeat and SOCS box protein 5 (329 aa).

ANK repeat units follow at residues 69-98, 102-131, 135-164, 167-196, 200-229, and 232-261; these read ADRSPLHEAASQGRLLALRTLLSQGYNVNA, DHVTPLHEACLGDHVACARTLLEAGANANA, DGVTPLFNACSQGSASCAELLLEYGAKAQL, CFPSPTHEAASKGHHECLDILIAWGIDVDQ, HLGTPLYVACMSQQFHCIWKLLYAGADVHK, and YWDTPLHAAAQQPSTEIVNLLLEFGADINA. Residues 278–329 form the SOCS box domain; the sequence is AVERILLQHEATPSSLCQLCRLCIRNYIGRQRFHLIPQLQLPTLLQNFLQYR.

It belongs to the ankyrin SOCS box (ASB) family.

Its pathway is protein modification; protein ubiquitination. May be a substrate-recognition component of a SCF-like ECS (Elongin-Cullin-SOCS-box protein) E3 ubiquitin-protein ligase complex which mediates the ubiquitination and subsequent proteasomal degradation of target proteins. May play a role in the initiation of arteriogenesis. This Mus musculus (Mouse) protein is Ankyrin repeat and SOCS box protein 5 (Asb5).